The following is a 279-amino-acid chain: NH(3)-dependent NAD(+) synthetase (279 aa).

46–53 (GVSGGQDS) is a binding site for ATP. Residue Asp-52 coordinates Mg(2+). Arg-139 lines the deamido-NAD(+) pocket. Thr-159 provides a ligand contact to ATP. Glu-164 lines the Mg(2+) pocket. Deamido-NAD(+)-binding residues include Lys-172 and Asp-179. Lys-188 and Thr-210 together coordinate ATP. A deamido-NAD(+)-binding site is contributed by 259-260 (HK).

It belongs to the NAD synthetase family. Homodimer.

It carries out the reaction deamido-NAD(+) + NH4(+) + ATP = AMP + diphosphate + NAD(+) + H(+). It participates in cofactor biosynthesis; NAD(+) biosynthesis; NAD(+) from deamido-NAD(+) (ammonia route): step 1/1. Functionally, catalyzes the ATP-dependent amidation of deamido-NAD to form NAD. Uses ammonia as a nitrogen source. The polypeptide is NH(3)-dependent NAD(+) synthetase (Leifsonia xyli subsp. xyli (strain CTCB07)).